The following is a 320-amino-acid chain: HPr kinase/phosphorylase (320 aa).

Residues His141 and Lys162 contribute to the active site. An ATP-binding site is contributed by 156–163 (GHSGLGKS). Ser163 contacts Mg(2+). Asp180 (proton acceptor; for phosphorylation activity. Proton donor; for dephosphorylation activity) is an active-site residue. An important for the catalytic mechanism of both phosphorylation and dephosphorylation region spans residues 204 to 213 (LEVRGLGILN). Glu205 serves as a coordination point for Mg(2+). Arg248 is a catalytic residue. An important for the catalytic mechanism of dephosphorylation region spans residues 269–274 (PVAVGR).

Belongs to the HPrK/P family. As to quaternary structure, homohexamer. Requires Mg(2+) as cofactor.

It catalyses the reaction [HPr protein]-L-serine + ATP = [HPr protein]-O-phospho-L-serine + ADP + H(+). The catalysed reaction is [HPr protein]-O-phospho-L-serine + phosphate + H(+) = [HPr protein]-L-serine + diphosphate. Catalyzes the ATP- as well as the pyrophosphate-dependent phosphorylation of a specific serine residue in HPr, a phosphocarrier protein of the phosphoenolpyruvate-dependent sugar phosphotransferase system (PTS). HprK/P also catalyzes the pyrophosphate-producing, inorganic phosphate-dependent dephosphorylation (phosphorolysis) of seryl-phosphorylated HPr (P-Ser-HPr). The chain is HPr kinase/phosphorylase from Neisseria meningitidis serogroup A / serotype 4A (strain DSM 15465 / Z2491).